The chain runs to 81 residues: Sulfur carrier protein TusA (81 aa).

The active-site Cysteine persulfide intermediate is cysteine 19.

Belongs to the sulfur carrier protein TusA family. In terms of assembly, interacts with IscS.

The protein localises to the cytoplasm. The protein operates within tRNA modification. In terms of biological role, sulfur carrier protein involved in sulfur trafficking in the cell. Part of a sulfur-relay system required for 2-thiolation during synthesis of 2-thiouridine of the modified wobble base 5-methylaminomethyl-2-thiouridine (mnm(5)s(2)U) in tRNA. Interacts with IscS and stimulates its cysteine desulfurase activity. Accepts an activated sulfur from IscS, which is then transferred to TusD, and thus determines the direction of sulfur flow from IscS to 2-thiouridine formation. Also appears to be involved in sulfur transfer for the biosynthesis of molybdopterin. The chain is Sulfur carrier protein TusA from Pectobacterium atrosepticum (strain SCRI 1043 / ATCC BAA-672) (Erwinia carotovora subsp. atroseptica).